The primary structure comprises 211 residues: Imidazole glycerol phosphate synthase subunit HisH (211 aa).

In terms of domain architecture, Glutamine amidotransferase type-1 spans 1–206 (MIGIIDYGRG…GKWVNEDATV (206 aa)). The Nucleophile role is filled by Cys79. Residues His181 and Glu183 contribute to the active site.

In terms of assembly, heterodimer of HisH and HisF.

Its subcellular location is the cytoplasm. It catalyses the reaction 5-[(5-phospho-1-deoxy-D-ribulos-1-ylimino)methylamino]-1-(5-phospho-beta-D-ribosyl)imidazole-4-carboxamide + L-glutamine = D-erythro-1-(imidazol-4-yl)glycerol 3-phosphate + 5-amino-1-(5-phospho-beta-D-ribosyl)imidazole-4-carboxamide + L-glutamate + H(+). It carries out the reaction L-glutamine + H2O = L-glutamate + NH4(+). The protein operates within amino-acid biosynthesis; L-histidine biosynthesis; L-histidine from 5-phospho-alpha-D-ribose 1-diphosphate: step 5/9. Functionally, IGPS catalyzes the conversion of PRFAR and glutamine to IGP, AICAR and glutamate. The HisH subunit catalyzes the hydrolysis of glutamine to glutamate and ammonia as part of the synthesis of IGP and AICAR. The resulting ammonia molecule is channeled to the active site of HisF. The chain is Imidazole glycerol phosphate synthase subunit HisH from Desulfitobacterium hafniense (strain DSM 10664 / DCB-2).